The sequence spans 574 residues: Craniofacial development protein 2 (574 aa).

Composition is skewed to basic and acidic residues over residues 1–16, 23–37, 45–55, 86–111, and 134–172; these read MEEV…KAED, ECHE…KEDE, EQTKGIKRKAE, SEKE…KEDE, and TGEE…DRQQ. Disordered regions lie at residues 1 to 222 and 488 to 574; these read MEEV…PAVD and TRPF…SGVF. The segment covering 199–208 has biased composition (polar residues); the sequence is KTGTNASSKN. The interval 493 to 572 is hydrophilic; the sequence is GTNEADDTSE…AVPSLPAGSG (80 aa). The span at 502 to 516 shows a compositional bias: basic and acidic residues; the sequence is EESKPSSEQKGKEKP. A compositionally biased stretch (low complexity) spans 518–528; that stretch reads ASVPSAVSSVP.

The protein resides in the cytoplasm. The protein localises to the nucleus. The polypeptide is Craniofacial development protein 2 (CFDP2) (Tragulus javanicus (Lesser Malay chevrotain)).